The chain runs to 217 residues: Small ribosomal subunit protein uS3c (217 aa).

The KH type-2 domain maps to 47–119; it reads VRTHIKSSSN…KLHIAIEKVA (73 aa).

The protein belongs to the universal ribosomal protein uS3 family. As to quaternary structure, part of the 30S ribosomal subunit.

It localises to the plastid. It is found in the chloroplast. This is Small ribosomal subunit protein uS3c (rps3) from Pinus koraiensis (Korean pine).